The sequence spans 471 residues: MVSRAKVGAETTKGIDEPDRNDNTDDNGAGAVEVTEAAEDAVELTNDISTQLPQHGFLARFYTGLSRLYTGTGVFEVVGRRRLWYSVGGVIVAVAVLSIIVRGFTFGIDFKGGTTVSMPVSPGVGGTGAIEVAQVADVFKKTLGSDPESVVVVGNGASATVRISSKTLSNDQTSKLRNALFDAFGPKGADAKPSKQAISDAAVSETWGGQITKKVVIALVVFLVLVGLYITVRYERYMAISALTTMCFDLTVTAGVYSLVGFEVTPATVIGLLTILGFSLYDTVIVFDKVEENTHGFQHTTRRTFAEQANLAINQTFMRSINTSLISVLPVLALMVVAVWLLGVGTLKDLALVQLVGIIVGTYSSIFFATPLLVTLRERTELVRTHTRRVVKRRTLGSQVGKKNADSHVAAGTRKPQNQAESCADASSQEGTEVATASVPTVLSKLAPGVRPVRPTGTRRPTGKRNNVGRR.

The segment at 1–29 is disordered; it reads MVSRAKVGAETTKGIDEPDRNDNTDDNGA. Over residues 13–23 the composition is skewed to basic and acidic residues; the sequence is KGIDEPDRNDN. Transmembrane regions (helical) follow at residues 88-108, 211-231, 242-262, 267-287, 325-345, and 355-375; these read GGVIVAVAVLSIIVRGFTFGI, ITKKVVIALVVFLVLVGLYIT, ALTTMCFDLTVTAGVYSLVGF, ATVIGLLTILGFSLYDTVIVF, LISVLPVLALMVVAVWLLGVG, and LVGIIVGTYSSIFFATPLLVT. The interval 393 to 471 is disordered; it reads RRTLGSQVGK…TGKRNNVGRR (79 aa). Polar residues predominate over residues 415-431; it reads KPQNQAESCADASSQEG. The span at 448-460 shows a compositional bias: low complexity; sequence PGVRPVRPTGTRR. The span at 461–471 shows a compositional bias: basic residues; sequence PTGKRNNVGRR.

Belongs to the SecD/SecF family. SecF subfamily. As to quaternary structure, forms a complex with SecD. Part of the essential Sec protein translocation apparatus which comprises SecA, SecYEG and auxiliary proteins SecDF. Other proteins may also be involved.

The protein localises to the cell membrane. In terms of biological role, part of the Sec protein translocase complex. Interacts with the SecYEG preprotein conducting channel. SecDF uses the proton motive force (PMF) to complete protein translocation after the ATP-dependent function of SecA. The protein is Protein translocase subunit SecF of Mycobacterium leprae (strain TN).